The following is a 130-amino-acid chain: Cysteine methyltransferase (130 aa).

The enzyme catalyses [trehalose-6-phosphate synthase]-L-cysteine + S-adenosyl-L-methionine = [trehalose-6-phosphate synthase]-S-methyl-L-cysteine + S-adenosyl-L-homocysteine + H(+). In terms of biological role, S-adenosyl-L-methionine-dependent protein-cysteine S-methyltransferase with broad substrate specificity. Methylates trehalose-6-phosphate synthase (TPS), enhancing its enzymatic activity and promoting trehalose synthesis upon entry of cells into stationary phase. The protein is Cysteine methyltransferase of Saccharomyces cerevisiae (Baker's yeast).